The chain runs to 296 residues: Cytidine deaminase (296 aa).

CMP/dCMP-type deaminase domains lie at Thr47–Lys167 and Asp186–Ile296. Asn88 to Glu90 is a binding site for substrate. Residue His101 participates in Zn(2+) binding. Glu103 (proton donor) is an active-site residue. 2 residues coordinate Zn(2+): Cys128 and Cys131.

It belongs to the cytidine and deoxycytidylate deaminase family. In terms of assembly, homodimer. It depends on Zn(2+) as a cofactor.

It catalyses the reaction cytidine + H2O + H(+) = uridine + NH4(+). The catalysed reaction is 2'-deoxycytidine + H2O + H(+) = 2'-deoxyuridine + NH4(+). Its function is as follows. This enzyme scavenges exogenous and endogenous cytidine and 2'-deoxycytidine for UMP synthesis. In Shewanella oneidensis (strain ATCC 700550 / JCM 31522 / CIP 106686 / LMG 19005 / NCIMB 14063 / MR-1), this protein is Cytidine deaminase.